Consider the following 199-residue polypeptide: Hematopoietic prostaglandin D synthase (199 aa).

In terms of domain architecture, GST N-terminal spans 2–79 (PNYKLTYFNL…YLARESGLAG (78 aa)). Glutathione-binding positions include tyrosine 8, arginine 14, tryptophan 39, 49-51 (GKV), and 63-64 (QS). Positions 81-199 (TPVEQALADA…WIQKRPKTAI (119 aa)) constitute a GST C-terminal domain.

It belongs to the GST superfamily. Sigma family. Glutathione serves as cofactor. As to expression, highly expressed in liver, kidney, small intestine and colon, moderately in pancreas, bone marrow, lung and ovary, and expressed at low levels in spleen, thymus, heart and brain. Not detected in oviduct or skin (at protein level). Expressed in liver.

Its subcellular location is the cytoplasm. The enzyme catalyses prostaglandin H2 = prostaglandin D2. It catalyses the reaction RX + glutathione = an S-substituted glutathione + a halide anion + H(+). The catalysed reaction is 2-glyceryl-prostaglandin H2 = 2-glyceryl-prostaglandin D2. Its function is as follows. Bifunctional enzyme which catalyzes both the conversion of PGH2 to PGD2, a prostaglandin involved in smooth muscle contraction/relaxation and a potent inhibitor of platelet aggregation, and the conjugation of glutathione with a wide range of aryl halides, organic isothiocyanates and alpha,beta-unsaturated carbonyls. Also exhibits low glutathione-peroxidase activity towards cumene hydroperoxide and t-butyl hydroperoxide. This chain is Hematopoietic prostaglandin D synthase (HPGDS), found in Gallus gallus (Chicken).